We begin with the raw amino-acid sequence, 65 residues long: Large ribosomal subunit protein bL35 (65 aa).

It belongs to the bacterial ribosomal protein bL35 family.

The sequence is that of Large ribosomal subunit protein bL35 from Thermotoga petrophila (strain ATCC BAA-488 / DSM 13995 / JCM 10881 / RKU-1).